Consider the following 397-residue polypeptide: Nickel-cobalt-cadmium resistance protein NccB (397 aa).

Residues 10-30 (PSWPMIAGVAAAAALVGFGAA) form a helical membrane-spanning segment. Residues 137-195 (EAAAMAAERKVAQARADLARKTYERESSLFQQGVTPRQEMESARIALDVAQAEVQRAAT) are a coiled coil.

The protein belongs to the membrane fusion protein (MFP) (TC 8.A.1) family.

Its subcellular location is the cell inner membrane. Component of the NCC cation efflux system that confers resistance to nickel, cobalt and cadmium. The polypeptide is Nickel-cobalt-cadmium resistance protein NccB (nccB) (Alcaligenes xylosoxydans xylosoxydans (Achromobacter xylosoxidans)).